The chain runs to 395 residues: Elongation factor Tu (395 aa).

A tr-type G domain is found at 10-204; that stretch reads KPHVNVGTIG…AVDNWVPLPE (195 aa). Residues 19-26 are G1; it reads GHVDHGKT. Residue 19–26 participates in GTP binding; sequence GHVDHGKT. Threonine 26 serves as a coordination point for Mg(2+). A G2 region spans residues 60–64; sequence GITIN. The G3 stretch occupies residues 81-84; that stretch reads DCPG. GTP-binding positions include 81–85 and 136–139; these read DCPGH and NKCD. Residues 136 to 139 are G4; sequence NKCD. The tract at residues 174–176 is G5; that stretch reads SAL.

This sequence belongs to the TRAFAC class translation factor GTPase superfamily. Classic translation factor GTPase family. EF-Tu/EF-1A subfamily. As to quaternary structure, monomer.

It is found in the cytoplasm. It carries out the reaction GTP + H2O = GDP + phosphate + H(+). GTP hydrolase that promotes the GTP-dependent binding of aminoacyl-tRNA to the A-site of ribosomes during protein biosynthesis. This Porphyromonas gingivalis (strain ATCC 33277 / DSM 20709 / CIP 103683 / JCM 12257 / NCTC 11834 / 2561) protein is Elongation factor Tu.